The sequence spans 314 residues: Olfactory receptor 10A3 (314 aa).

Over 1–25 (MKRQNQSCVVEFILLGFSNFPELQV) the chain is Extracellular. N-linked (GlcNAc...) asparagine glycosylation is present at asparagine 5. The chain crosses the membrane as a helical span at residues 26-46 (QLFGVFLVIYVVTLMGNAIIT). Over 47–54 (VIISLNQS) the chain is Cytoplasmic. The helical transmembrane segment at 55–75 (LHVPMYLFLLNLSVVEVSFSA) threads the bilayer. At 76–99 (VITPEMLVVLSTEKTMISFVGCFA) the chain is on the extracellular side. A disulfide bond links cysteine 97 and cysteine 189. Residues 100-120 (QMYFILLFGGTECFLLGAMAY) form a helical membrane-spanning segment. The Cytoplasmic portion of the chain corresponds to 121-139 (DRFAAICHPLNYPVIMNRG). A helical transmembrane segment spans residues 140–160 (VFMKLVIFSWISGIMVATVQT). At 161-197 (TWVFSFPFCGPNEINHLFCETPPVLELVCADTFLFEI) the chain is on the extracellular side. A helical membrane pass occupies residues 198–217 (YAFTGTILIVMVPFLLILLS). The Cytoplasmic portion of the chain corresponds to 218-237 (YIRVLFAILKMPSTTGRQKA). A helical membrane pass occupies residues 238-258 (FSTCASHLTSVTLFYGTANMT). At 259-271 (YLQPKSGYSPETK) the chain is on the extracellular side. Residues 272 to 292 (KLISLAYTLLTPLLNPLIYSL) form a helical membrane-spanning segment. The Cytoplasmic portion of the chain corresponds to 293-314 (RNSEMKRTLIKLWRRKVILHTF).

It belongs to the G-protein coupled receptor 1 family.

The protein resides in the cell membrane. Functionally, odorant receptor. In Homo sapiens (Human), this protein is Olfactory receptor 10A3 (OR10A3).